Here is an 85-residue protein sequence, read N- to C-terminus: V-type proton ATPase subunit f (85 aa).

2 helical membrane passes run 13–33 and 56–76; these read CTGL…LFSI and CLGA…QVIV.

In terms of assembly, V-ATPase is a heteromultimeric enzyme composed of a peripheral catalytic V1 complex (components A to H) attached to an integral membrane V0 proton pore complex (components: a, c, c', c'', d, e, f and VOA1).

It localises to the endoplasmic reticulum membrane. Accessory component of the V0 complex of vacuolar(H+)-ATPase (V-ATPase), a multisubunit enzyme composed of a peripheral complex (V1) that hydrolyzes ATP and a membrane integral complex (V0) that translocates protons. V-ATPase is responsible for acidifying and maintaining the pH of intracellular compartments. The chain is V-type proton ATPase subunit f from Schizosaccharomyces pombe (strain 972 / ATCC 24843) (Fission yeast).